The chain runs to 65 residues: Photosystem II reaction center protein Z (65 aa).

The next 2 helical transmembrane spans lie at 11–31 (LVLA…VIFA) and 44–64 (WLAC…DGIF).

The protein belongs to the PsbZ family. As to quaternary structure, PSII is composed of 1 copy each of membrane proteins PsbA, PsbB, PsbC, PsbD, PsbE, PsbF, PsbH, PsbI, PsbJ, PsbK, PsbL, PsbM, PsbT, PsbY, PsbZ, Psb30/Ycf12, at least 3 peripheral proteins of the oxygen-evolving complex and a large number of cofactors. It forms dimeric complexes.

The protein resides in the plastid. It localises to the chloroplast thylakoid membrane. In terms of biological role, may control the interaction of photosystem II (PSII) cores with the light-harvesting antenna, regulates electron flow through the 2 photosystem reaction centers. PSII is a light-driven water plastoquinone oxidoreductase, using light energy to abstract electrons from H(2)O, generating a proton gradient subsequently used for ATP formation. The sequence is that of Photosystem II reaction center protein Z from Euglena gracilis.